The chain runs to 472 residues: Spliceosome-associated protein CWC27 homolog (472 aa).

N-acetylserine is present on S2. A PPIase cyclophilin-type domain is found at 11 to 166 (TNGKVLLKTT…NPHKIKSCEV (156 aa)). N-linked (GlcNAc...) asparagine glycosylation is found at N109 and N201. Residues 206 to 230 (SFGEEAEEEEEEVNRVSQSMKGKSK) are a coiled coil. Disordered stretches follow at residues 206–386 (SFGE…DQTL) and 398–472 (QAIA…KERR). Over residues 231–241 (SSHDLLKDDPH) the composition is skewed to basic and acidic residues. The segment covering 257-268 (DLVDDGEDESAE) has biased composition (acidic residues). 3 stretches are compositionally biased toward basic and acidic residues: residues 269–286 (HDEYIDGDEKNLMRERIA), 304–347 (EVEK…KRSE), and 359–371 (EYRREKQKYEALR). The stretch at 306-377 (EKKSVSRSEE…EALRKQQSKK (72 aa)) forms a coiled coil. S346 carries the post-translational modification Phosphoserine. The span at 404–418 (PENDIPETEVEDDEG) shows a compositional bias: acidic residues. 2 stretches are compositionally biased toward basic and acidic residues: residues 425–437 (QFEDKSRKVKDAS) and 457–472 (RREESKKLMREKKERR).

This sequence belongs to the cyclophilin-type PPIase family. As to quaternary structure, part of the activated spliceosome B/catalytic step 1 spliceosome, one of the forms of the spliceosome which has a well-formed active site but still cannot catalyze the branching reaction and is composed at least of 52 proteins, the U2, U5 and U6 snRNAs and the pre-mRNA. Recruited during early steps of activated spliceosome B maturation, it is probably one of the first proteins released from this complex as he matures to the spliceosome C complex. Component of the minor spliceosome, which splices U12-type introns.

It localises to the nucleus. As part of the spliceosome, plays a role in pre-mRNA splicing. Probable inactive PPIase with no peptidyl-prolyl cis-trans isomerase activity. As a component of the minor spliceosome, involved in the splicing of U12-type introns in pre-mRNAs. In Homo sapiens (Human), this protein is Spliceosome-associated protein CWC27 homolog.